We begin with the raw amino-acid sequence, 289 residues long: ATP phosphoribosyltransferase (289 aa).

This sequence belongs to the ATP phosphoribosyltransferase family. Long subfamily. Mg(2+) is required as a cofactor.

Its subcellular location is the cytoplasm. The catalysed reaction is 1-(5-phospho-beta-D-ribosyl)-ATP + diphosphate = 5-phospho-alpha-D-ribose 1-diphosphate + ATP. The protein operates within amino-acid biosynthesis; L-histidine biosynthesis; L-histidine from 5-phospho-alpha-D-ribose 1-diphosphate: step 1/9. Feedback inhibited by histidine. Its function is as follows. Catalyzes the condensation of ATP and 5-phosphoribose 1-diphosphate to form N'-(5'-phosphoribosyl)-ATP (PR-ATP). Has a crucial role in the pathway because the rate of histidine biosynthesis seems to be controlled primarily by regulation of HisG enzymatic activity. This is ATP phosphoribosyltransferase from Desulforudis audaxviator (strain MP104C).